Consider the following 432-residue polypeptide: Putative D-alanyl-D-alanine carboxypeptidase (432 aa).

The helical; Signal-anchor transmembrane segment at 7–25 (ATVLLTFSLSAFAVEYPVL) threads the bilayer.

This sequence belongs to the peptidase S12 family. YfeW subfamily.

The protein resides in the cell inner membrane. The enzyme catalyses Preferential cleavage: (Ac)2-L-Lys-D-Ala-|-D-Ala. Also transpeptidation of peptidyl-alanyl moieties that are N-acyl substituents of D-alanine.. The protein is Putative D-alanyl-D-alanine carboxypeptidase of Salmonella gallinarum (strain 287/91 / NCTC 13346).